The following is a 753-amino-acid chain: Catalase-peroxidase (753 aa).

The tryptophyl-tyrosyl-methioninium (Trp-Tyr) (with M-264) cross-link spans W90–Y238. H91 functions as the Proton acceptor in the catalytic mechanism. Residues S196–I220 are disordered. A cross-link (tryptophyl-tyrosyl-methioninium (Tyr-Met) (with W-90)) is located at residues Y238–M264. H279 provides a ligand contact to heme b.

The protein belongs to the peroxidase family. Peroxidase/catalase subfamily. As to quaternary structure, homodimer or homotetramer. The cofactor is heme b. Formation of the three residue Trp-Tyr-Met cross-link is important for the catalase, but not the peroxidase activity of the enzyme.

Its subcellular location is the cytoplasm. It catalyses the reaction H2O2 + AH2 = A + 2 H2O. The enzyme catalyses 2 H2O2 = O2 + 2 H2O. Its activity is regulated as follows. Inhibited by KCN. In terms of biological role, bifunctional enzyme with both catalase and broad-spectrum peroxidase activity. The polypeptide is Catalase-peroxidase (Neurospora crassa (strain ATCC 24698 / 74-OR23-1A / CBS 708.71 / DSM 1257 / FGSC 987)).